A 230-amino-acid chain; its full sequence is Leucyl/phenylalanyl-tRNA--protein transferase (230 aa).

The protein belongs to the L/F-transferase family.

The protein localises to the cytoplasm. The enzyme catalyses N-terminal L-lysyl-[protein] + L-leucyl-tRNA(Leu) = N-terminal L-leucyl-L-lysyl-[protein] + tRNA(Leu) + H(+). It carries out the reaction N-terminal L-arginyl-[protein] + L-leucyl-tRNA(Leu) = N-terminal L-leucyl-L-arginyl-[protein] + tRNA(Leu) + H(+). The catalysed reaction is L-phenylalanyl-tRNA(Phe) + an N-terminal L-alpha-aminoacyl-[protein] = an N-terminal L-phenylalanyl-L-alpha-aminoacyl-[protein] + tRNA(Phe). Functions in the N-end rule pathway of protein degradation where it conjugates Leu, Phe and, less efficiently, Met from aminoacyl-tRNAs to the N-termini of proteins containing an N-terminal arginine or lysine. The protein is Leucyl/phenylalanyl-tRNA--protein transferase of Proteus mirabilis (strain HI4320).